Consider the following 344-residue polypeptide: Ubiquitin-associated domain-containing protein 2 (344 aa).

Residues 1-35 form the signal peptide; the sequence is MFTSTGSSGLYKAPLSKSLLLVPSALSLLLALLLP. Over 36 to 91 the chain is Extracellular; that stretch reads HCQKLFVYDLHAVKNDFQIWRLICGRIICLDLKDTFCSSLLIYNFRIFERRYGSRK. Residues 92–112 form a helical membrane-spanning segment; it reads FASFLLGSWVLSALFDFLLIE. The Cytoplasmic portion of the chain corresponds to 113-125; that stretch reads AMQYFFGITAASN. Residues 126-146 form a helical membrane-spanning segment; that stretch reads LPSGFLAPVFALFVPFYCSIP. The Extracellular portion of the chain corresponds to 147-163; it reads RVQVAQILGPLSITNKT. N-linked (GlcNAc...) asparagine glycosylation is present at asparagine 161. Residues 164–184 traverse the membrane as a helical segment; it reads LIYILGLQLFTSGSYIWIVAI. The Cytoplasmic segment spans residues 185-344; it reads SGLMSGLCYD…NVATNFLLQH (160 aa). The 41-residue stretch at 304-344 folds into the UBA domain; the sequence is EVSEEQVARLMEMGFSRGDALEALRASNNDLNVATNFLLQH.

Interacts with FAF2. Interacts with LMBR1L. Interacts with AMFR and VCP.

The protein localises to the endoplasmic reticulum membrane. Its function is as follows. Restricts trafficking of FAF2 from the endoplasmic reticulum to lipid droplets. In association with LMBR1L and E3 ubiquitin-protein ligase AMFR, negatively regulates the canonical Wnt signaling pathway in the lymphocytes by promoting the ubiquitin-mediated degradation of CTNNB1 and Wnt receptors FZD6 and LRP6. The polypeptide is Ubiquitin-associated domain-containing protein 2 (UBAC2) (Homo sapiens (Human)).